Reading from the N-terminus, the 994-residue chain is Chromatin modification-related protein vid21 (994 aa).

Disordered stretches follow at residues P122–V275 and P288–V308. Basic and acidic residues-rich tracts occupy residues T158–I171, K178–G191, L204–E233, V254–S265, and P288–E305. 2 positions are modified to phosphoserine: S298 and S378. An HSA domain is found at P475 to E548. The segment at S671–N693 is disordered. A compositionally biased stretch (basic and acidic residues) spans F672–N693. The region spanning K713–D773 is the Myb-like domain. Disordered regions lie at residues T857–L880 and E975–Q994. Positions L880 to L912 form a coiled coil.

This sequence belongs to the EAF1 family. Component of the NuA4 histone acetyltransferase complex.

It localises to the nucleus. Its function is as follows. Component of the NuA4 histone acetyltransferase complex which is involved in transcriptional activation of selected genes principally by acetylation of nucleosomal histone H4 and H2A. The NuA4 complex is also involved in DNA repair. This Schizosaccharomyces pombe (strain 972 / ATCC 24843) (Fission yeast) protein is Chromatin modification-related protein vid21 (vid21).